The sequence spans 599 residues: DNA primase (599 aa).

The segment at 38-62 (CPFHDEKTPSFTVSEDKQICHCFGC) adopts a CHC2-type zinc-finger fold. The 82-residue stretch at 260–341 (DEIVLLEGFM…NVFVIQLPSG (82 aa)) folds into the Toprim domain. Glutamate 266, aspartate 310, and aspartate 312 together coordinate Mg(2+).

The protein belongs to the DnaG primase family. Monomer. Interacts with DnaB. The cofactor is Zn(2+). Requires Mg(2+) as cofactor.

The catalysed reaction is ssDNA + n NTP = ssDNA/pppN(pN)n-1 hybrid + (n-1) diphosphate.. RNA polymerase that catalyzes the synthesis of short RNA molecules used as primers for DNA polymerase during DNA replication. In Staphylococcus aureus (strain MRSA252), this protein is DNA primase.